Reading from the N-terminus, the 1738-residue chain is Sodium leak channel NALCN (1738 aa).

The Cytoplasmic segment spans residues 1 to 36 (MLKRKQSSRVEAQPVTDFGPDESLSDNADILWINKP). A helical membrane pass occupies residues 37–57 (WVHSLLRICAIISVISVCMNT). Residues 58-65 (PMTFEHYP) lie on the Extracellular side of the membrane. The chain crosses the membrane as a helical span at residues 66 to 90 (PLQYVTFTLDTLLMFLYTAEMIAKM). Over 91–106 (HIRGIVKGDSSYVKDR) the chain is Cytoplasmic. The helical transmembrane segment at 107–129 (WCVFDGFMVFCLWVSLVLQVFEI) threads the bilayer. At 130-137 (ADIVDQMS) the chain is on the extracellular side. Residues 138–158 (PWGMLRIPRPLIMIRAFRIYF) form a helical; Voltage-sensor membrane-spanning segment. Residues 159–173 (RFELPRTRITNILKR) are Cytoplasmic-facing. The helical transmembrane segment at 174-199 (SGEQIWSVSIFLLFFLLLYGILGVQM) threads the bilayer. Topologically, residues 200 to 269 (FGTFTYHCVV…YSGFNEIGTS (70 aa)) are extracellular. 2 cysteine pairs are disulfide-bonded: C207–C239 and C229–C245. Residues N210 and N216 are each glycosylated (N-linked (GlcNAc...) asparagine). The pore-forming intramembrane region spans 270-289 (IFTVYEASSQEGWVFLMYRA). Over 290 to 294 (IDSFP) the chain is Extracellular. The chain crosses the membrane as a helical span at residues 295–322 (RWRSYFYFITLIFFLAWLVKNVFIAVII). At 323-382 (ETFAEIRVQFQQMWGTRSSTTSTATTQMFHEDAAGGWQLVAVDVNKPQGRAPACLQKMMR) the chain is on the cytoplasmic side. A helical membrane pass occupies residues 383–403 (SSVFHMFILSMVTVDVIVAAS). Residues 404–416 (NYYKGENFRRQYD) are Extracellular-facing. A helical transmembrane segment spans residues 417 to 439 (EFYLAEVAFTVLFDLEALLKIWC). At 440–447 (LGFTGYIS) the chain is on the cytoplasmic side. Residues 448 to 468 (SSLHKFELLLVIGTTLHVYPD) traverse the membrane as a helical segment. Residues 469–472 (LYHS) lie on the Extracellular side of the membrane. Residues 473–492 (QFTYFQVLRVVRLIKISPAL) form a helical; Voltage-sensor membrane-spanning segment. Residues 493–502 (EDFVYKIFGP) lie on the Cytoplasmic side of the membrane. A helical transmembrane segment spans residues 503–530 (GKKLGSLVVFTASLLIVMSAISLQMFCF). Topologically, residues 531 to 543 (VEELDRFTTFPRA) are extracellular. An intramembrane region (pore-forming) is located at residues 544–563 (FMSMFQILTQEGWVDVMDQT). Over 564 to 578 (LNAVGHMWAPLVAIY) the chain is Extracellular. A helical membrane pass occupies residues 579–599 (FILYHLFATLILLSLFVAVIL). Over 600–886 (DNLELDEDLK…QLYDLLGLVT (287 aa)) the chain is Cytoplasmic. The segment at 762 to 785 (QERRSLRHGSNSQRISRGKSLETL) is disordered. The stretch at 795 to 830 (YRNAQREDSEIKMIQEKKEQAEMKRKVQEEELRENH) forms a coiled coil. A helical transmembrane segment spans residues 887-906 (YLDWVMITVTICSCISMMFE). Topologically, residues 907 to 915 (SPFRRVMHA) are extracellular. A helical membrane pass occupies residues 916-939 (PTLQIAEYVFVIFMSIELNLKIMA). Over 940–947 (DGLFFTPT) the chain is Cytoplasmic. Residues 948–972 (AVIRDFGGVMDIFIYLVSLIFLCWM) form a helical membrane-spanning segment. Topologically, residues 973–980 (PQNVPAES) are extracellular. The chain crosses the membrane as a helical; Voltage-sensor span at residues 981–1003 (GAQLLMVLRCLRPLRIFKLVPQM). Residues 1004 to 1015 (RKVVRELFSGFK) are Cytoplasmic-facing. Residues 1016–1039 (EIFLVSILLLTLMLVFASFGVQLF) form a helical membrane-spanning segment. Residues 1040–1104 (AGKLAKCNDP…NFNFDNVGNA (65 aa)) are Extracellular-facing. A disulfide bridge links C1046 with C1057. N-linked (GlcNAc...) asparagine glycosylation occurs at N1064. The segment at residues 1105–1124 (MLALFEVLSLKGWVEVRDVI) is an intramembrane region (pore-forming). Residues 1125-1129 (IHRVG) are Extracellular-facing. A helical transmembrane segment spans residues 1130–1159 (PIHGIYIHVFVFLGCMIGLTLFVGVVIANF). At 1160–1210 (NENKGTALLTVDQRRWEDLKSRLKIAQPLHLPPRPDNDGFRAKMYDITQHP) the chain is on the cytoplasmic side. Residues 1211–1227 (FFKRTIALLVLAQSVLL) traverse the membrane as a helical segment. At 1228–1236 (SVKWDVDDP) the chain is on the extracellular side. Residues 1237-1260 (VTVPLATMSVVFTFIFVLEVTMKI) form a helical membrane-spanning segment. Residues 1261-1271 (IAMSPAGFWQS) lie on the Cytoplasmic side of the membrane. The chain crosses the membrane as a helical span at residues 1272–1293 (RRNRYDLLVTSLGVVWVVLHFA). At 1294–1296 (LLN) the chain is on the extracellular side. The chain crosses the membrane as a helical; Voltage-sensor span at residues 1297-1318 (AYTYMMGACVIVFRFFSICGKH). Residues 1319-1331 (VTLKMLLLTVVVS) are Cytoplasmic-facing. Residues 1332–1357 (MYKSFFIIVGMFLLLLCYAFAGVVLF) traverse the membrane as a helical segment. At 1358–1378 (GTVKYGENINRHANFSSAGKA) the chain is on the extracellular side. An intramembrane region (pore-forming) is located at residues 1379–1398 (ITVLFRIVTGEDWNKIMHDC). The Extracellular portion of the chain corresponds to 1399–1420 (MVQPPFCTPDEFTYWATDCGNY). C1405 and C1417 are disulfide-bonded. A helical transmembrane segment spans residues 1421 to 1447 (AGALMYFCSFYVIIAYIMLNLLVAIIV). Residues 1448–1738 (ENFSLFYSTE…DESGDDLLDI (291 aa)) are Cytoplasmic-facing. The segment at 1602 to 1679 (EQERSRFLNP…WRLPSAPKPI (78 aa)) is disordered. Positions 1613-1631 (SIETTQPSEDSNANSQDHS) are enriched in polar residues. Positions 1633-1648 (QPETSSQQQLLSPTLS) are enriched in low complexity.

It belongs to the NALCN family. As to quaternary structure, found in a complex with NALCN, UNC79, UNC80 and NACL1; these auxiliary subunits are indispensable for the function of the NALCN channel. Interacts with UNC80; required for the NALCN activation/inhibition by GPCRs in neurons. Found in a complex with NALCN, UNC79 and UNC80; UNC80 bridges NALCN to UNC79. Interacts with CHRM3. Post-translationally, phosphorylated on tyrosine residues. As to expression, widely expressed in the brain and spinal cord neurons. Expressed also in pancreatic islet cells.

Its subcellular location is the cell membrane. It catalyses the reaction Na(+)(in) = Na(+)(out). Its activity is regulated as follows. Inhibited by low micromolar concentrations of Gd(3+) and high micromolar concentrations of verapamil. Insensitive to tetrodotoxin (TTX) and potentiated by low external Ca(2+) concentration. Functionally, voltage-gated ion channel responsible for the resting Na(+) permeability that controls neuronal excitability. NALCN channel functions as a multi-protein complex, which consists at least of NALCN, NALF1, UNC79 and UNC80. NALCN is the voltage-sensing, pore-forming subunit of the NALCN channel complex. NALCN channel complex is constitutively active and conducts monovalent cations but is blocked by physiological concentrations of extracellular divalent cations. In addition to its role in regulating neuronal excitability, is required for normal respiratory rhythm, systemic osmoregulation by controlling the serum sodium concentration and in the regulation of the intestinal pace-making activity in the interstitial cells of Cajal. Plays a critical role in both maintenance of spontaneous firing of substantia nigra pars reticulata (SNr) neurons and physiological modulation of SNr neuron excitability. NALCN channel is also activated by neuropeptides such as neurotensin and substance P (SP) through a SRC family kinases-dependent pathway. In addition, NALCN activity is enhanced/modulated by several GPCRs, such as CHRM3. This Mus musculus (Mouse) protein is Sodium leak channel NALCN (Nalcn).